The primary structure comprises 95 residues: Aspartyl/glutamyl-tRNA(Asn/Gln) amidotransferase subunit C (95 aa).

This sequence belongs to the GatC family. Heterotrimer of A, B and C subunits.

The enzyme catalyses L-glutamyl-tRNA(Gln) + L-glutamine + ATP + H2O = L-glutaminyl-tRNA(Gln) + L-glutamate + ADP + phosphate + H(+). It catalyses the reaction L-aspartyl-tRNA(Asn) + L-glutamine + ATP + H2O = L-asparaginyl-tRNA(Asn) + L-glutamate + ADP + phosphate + 2 H(+). Allows the formation of correctly charged Asn-tRNA(Asn) or Gln-tRNA(Gln) through the transamidation of misacylated Asp-tRNA(Asn) or Glu-tRNA(Gln) in organisms which lack either or both of asparaginyl-tRNA or glutaminyl-tRNA synthetases. The reaction takes place in the presence of glutamine and ATP through an activated phospho-Asp-tRNA(Asn) or phospho-Glu-tRNA(Gln). The sequence is that of Aspartyl/glutamyl-tRNA(Asn/Gln) amidotransferase subunit C from Chlorobium chlorochromatii (strain CaD3).